The primary structure comprises 152 residues: Large ribosomal subunit protein uL13 (152 aa).

It belongs to the universal ribosomal protein uL13 family. Part of the 50S ribosomal subunit.

In terms of biological role, this protein is one of the early assembly proteins of the 50S ribosomal subunit, although it is not seen to bind rRNA by itself. It is important during the early stages of 50S assembly. In Wolbachia sp. subsp. Drosophila simulans (strain wRi), this protein is Large ribosomal subunit protein uL13.